The primary structure comprises 247 residues: Carboxy-S-adenosyl-L-methionine synthase (247 aa).

S-adenosyl-L-methionine contacts are provided by residues Tyr40, 65 to 67 (GAS), 90 to 91 (DN), 122 to 123 (DI), Asn137, and Arg204.

This sequence belongs to the class I-like SAM-binding methyltransferase superfamily. Cx-SAM synthase family. Homodimer.

It carries out the reaction prephenate + S-adenosyl-L-methionine = carboxy-S-adenosyl-L-methionine + 3-phenylpyruvate + H2O. In terms of biological role, catalyzes the conversion of S-adenosyl-L-methionine (SAM) to carboxy-S-adenosyl-L-methionine (Cx-SAM). This is Carboxy-S-adenosyl-L-methionine synthase from Pseudomonas putida (strain ATCC 700007 / DSM 6899 / JCM 31910 / BCRC 17059 / LMG 24140 / F1).